The primary structure comprises 348 residues: Rhodopsin (348 aa).

An N-acetylmethionine modification is found at Met-1. The Extracellular portion of the chain corresponds to 1–36; sequence MNGTEGPNFYVPFSNATGVVRSPFEYPQYYLAEPWQ. Asn-2 and Asn-15 each carry an N-linked (GlcNAc...) asparagine glycan. A helical membrane pass occupies residues 37 to 61; that stretch reads FSMLAAYMFLLIVLGFPINFLTLYV. Residues 62-73 lie on the Cytoplasmic side of the membrane; the sequence is TVQHKKLRTPLN. A helical transmembrane segment spans residues 74 to 96; it reads YILLNLAVADLFMVLGGFTSTLY. Residues 97 to 110 lie on the Extracellular side of the membrane; it reads TSLHGYFVFGPTGC. A disulfide bond links Cys-110 and Cys-187. Residues 111-133 form a helical membrane-spanning segment; that stretch reads NLEGFFATLGGEIALWSLVVLAI. Positions 134–136 match the 'Ionic lock' involved in activated form stabilization motif; that stretch reads ERY. The Cytoplasmic portion of the chain corresponds to 134–152; it reads ERYVVVCKPMSNFRFGENH. A helical transmembrane segment spans residues 153–173; that stretch reads AIMGVAFTWVMALACAAPPLA. Over 174 to 202 the chain is Extracellular; sequence GWSRYIPEGLQCSCGIDYYTLKPEVNNES. Glu-201 contacts Zn(2+). Residues 203–224 form a helical membrane-spanning segment; that stretch reads FVIYMFVVHFTIPMIIIFFCYG. The Cytoplasmic segment spans residues 225–252; it reads QLVFTVKEAAAQQQESATTQKAEKEVTR. The helical transmembrane segment at 253–274 threads the bilayer; it reads MVIIMVIAFLICWVPYASVAFY. The Extracellular portion of the chain corresponds to 275–284; it reads IFTHQGSNFG. A Zn(2+)-binding site is contributed by Gln-279. Residues 285 to 309 form a helical membrane-spanning segment; that stretch reads PIFMTIPAFFAKSAAIYNPVIYIMM. N6-(retinylidene)lysine is present on Lys-296. At 310 to 348 the chain is on the cytoplasmic side; it reads NKQFRNCMLTTICCGKNPLGDDEASATVSKTETSQVAPA. Residues Cys-322 and Cys-323 are each lipidated (S-palmitoyl cysteine). The interval 330–348 is interaction with SAG; the sequence is DDEASATVSKTETSQVAPA. Ser-334 bears the Phosphoserine mark. At Thr-336 the chain carries Phosphothreonine. Residue Ser-338 is modified to Phosphoserine. Residues Thr-340 and Thr-342 each carry the phosphothreonine modification. Residue Ser-343 is modified to Phosphoserine.

This sequence belongs to the G-protein coupled receptor 1 family. Opsin subfamily. As to quaternary structure, homodimer. May form a complex composed of RHO, GRK1 and RCVRN in a Ca(2+)-dependent manner; RCVRN prevents the interaction between GRK1 and RHO. Interacts with GRK1. Interacts (phosphorylated form) with SAG. Interacts with GNAT1. Interacts with GNAT3. SAG and G-proteins compete for a common binding site. Interacts with PRCD; the interaction promotes PRCD stability. Forms a complex with ASAP1 and ARF4. Forms a complex with ASAP1, RAB11A, Rabin8/RAB3IP, ARF4 and RAB11FIP3; the complex regulates Golgi-to-cilia rhodopsin/RHO transport in photoreceptors. Phosphorylated on some or all of the serine and threonine residues present in the C-terminal region. After activation by light, phosphorylated by GRK1 (in vitro). In terms of processing, contains one covalently linked retinal chromophore. Upon light absorption, the covalently bound 11-cis-retinal is converted to all-trans-retinal. After hydrolysis of the Schiff base and release of the covalently bound all-trans-retinal, active rhodopsin is regenerated by binding of a fresh molecule of 11-cis-retinal. As to expression, rod shaped photoreceptor cells which mediate vision in dim light.

The protein localises to the membrane. Its subcellular location is the cell projection. It is found in the cilium. The protein resides in the photoreceptor outer segment. Its function is as follows. Photoreceptor required for image-forming vision at low light intensity. Required for photoreceptor cell viability after birth. Light-induced isomerization of the chromophore 11-cis-retinal to all-trans-retinal triggers a conformational change that activates signaling via G-proteins. Subsequent receptor phosphorylation mediates displacement of the bound G-protein alpha subunit by the arrestin SAG and terminates signaling. The chain is Rhodopsin (RHO) from Homo sapiens (Human).